The following is a 179-amino-acid chain: MLAALYYVLKGDPYKALKEDLESLKKAKLLTEDLRITEKGMELIQQLISKPISLKGKVVSGDGEGRYYLSLEGYRRQVREKLGFDPFPGTLNVLLDPTSTEKKSTLMFKRPIILKGFTENGKRYGEVLAFPARVSGVEAALVIPLKTHHPPEIIELISPVELRKALKLKDGDEVEVLVY.

61 to 66 serves as a coordination point for CDP; sequence GDGEGR. Positions 90 and 92 each coordinate Mg(2+). Residues T147 and E155 each coordinate FMN. 160–163 lines the CDP pocket; that stretch reads VELR.

This sequence belongs to the archaeal riboflavin kinase family. Mg(2+) is required as a cofactor.

The catalysed reaction is riboflavin + CTP = CDP + FMN + H(+). It functions in the pathway cofactor biosynthesis; FMN biosynthesis; FMN from riboflavin (CTP route): step 1/1. In terms of biological role, catalyzes the CTP-dependent phosphorylation of riboflavin (vitamin B2) to form flavin mononucleotide (FMN). The protein is Riboflavin kinase of Ignicoccus hospitalis (strain KIN4/I / DSM 18386 / JCM 14125).